The chain runs to 453 residues: Pup--protein ligase (453 aa).

Glu-9 contributes to the Mg(2+) binding site. Arg-53 lines the ATP pocket. Tyr-55 is a Mg(2+) binding site. Asp-57 functions as the Proton acceptor in the catalytic mechanism. Residue Glu-63 participates in Mg(2+) binding. Thr-66 and Trp-420 together coordinate ATP.

The protein belongs to the Pup ligase/Pup deamidase family. Pup-conjugating enzyme subfamily.

The catalysed reaction is ATP + [prokaryotic ubiquitin-like protein]-L-glutamate + [protein]-L-lysine = ADP + phosphate + N(6)-([prokaryotic ubiquitin-like protein]-gamma-L-glutamyl)-[protein]-L-lysine.. It functions in the pathway protein degradation; proteasomal Pup-dependent pathway. The protein operates within protein modification; protein pupylation. In terms of biological role, catalyzes the covalent attachment of the prokaryotic ubiquitin-like protein modifier Pup to the proteasomal substrate proteins, thereby targeting them for proteasomal degradation. This tagging system is termed pupylation. The ligation reaction involves the side-chain carboxylate of the C-terminal glutamate of Pup and the side-chain amino group of a substrate lysine. This is Pup--protein ligase from Kribbella flavida (strain DSM 17836 / JCM 10339 / NBRC 14399).